The chain runs to 568 residues: Proline--tRNA ligase (568 aa).

This sequence belongs to the class-II aminoacyl-tRNA synthetase family. ProS type 1 subfamily. In terms of assembly, homodimer.

The protein resides in the cytoplasm. The catalysed reaction is tRNA(Pro) + L-proline + ATP = L-prolyl-tRNA(Pro) + AMP + diphosphate. In terms of biological role, catalyzes the attachment of proline to tRNA(Pro) in a two-step reaction: proline is first activated by ATP to form Pro-AMP and then transferred to the acceptor end of tRNA(Pro). As ProRS can inadvertently accommodate and process non-cognate amino acids such as alanine and cysteine, to avoid such errors it has two additional distinct editing activities against alanine. One activity is designated as 'pretransfer' editing and involves the tRNA(Pro)-independent hydrolysis of activated Ala-AMP. The other activity is designated 'posttransfer' editing and involves deacylation of mischarged Ala-tRNA(Pro). The misacylated Cys-tRNA(Pro) is not edited by ProRS. This Macrococcus caseolyticus (strain JCSC5402) (Macrococcoides caseolyticum) protein is Proline--tRNA ligase.